A 405-amino-acid chain; its full sequence is Argininosuccinate synthase (405 aa).

ATP-binding positions include 10–18 (AYSGGLDTS) and Ala-37. L-citrulline contacts are provided by Tyr-88 and Ser-93. Residue Gly-118 coordinates ATP. Residues Thr-120, Asn-124, and Asp-125 each coordinate L-aspartate. Asn-124 provides a ligand contact to L-citrulline. L-citrulline contacts are provided by Arg-128, Ser-177, Ser-186, Glu-263, and Tyr-275.

This sequence belongs to the argininosuccinate synthase family. Type 1 subfamily. Homotetramer.

The protein localises to the cytoplasm. It catalyses the reaction L-citrulline + L-aspartate + ATP = 2-(N(omega)-L-arginino)succinate + AMP + diphosphate + H(+). The protein operates within amino-acid biosynthesis; L-arginine biosynthesis; L-arginine from L-ornithine and carbamoyl phosphate: step 2/3. The polypeptide is Argininosuccinate synthase (Acetivibrio thermocellus (strain ATCC 27405 / DSM 1237 / JCM 9322 / NBRC 103400 / NCIMB 10682 / NRRL B-4536 / VPI 7372) (Clostridium thermocellum)).